Consider the following 305-residue polypeptide: UDP-3-O-acyl-N-acetylglucosamine deacetylase (305 aa).

Residues H79, H238, and D242 each coordinate Zn(2+). The active-site Proton donor is H265.

This sequence belongs to the LpxC family. Zn(2+) is required as a cofactor.

It carries out the reaction a UDP-3-O-[(3R)-3-hydroxyacyl]-N-acetyl-alpha-D-glucosamine + H2O = a UDP-3-O-[(3R)-3-hydroxyacyl]-alpha-D-glucosamine + acetate. It participates in glycolipid biosynthesis; lipid IV(A) biosynthesis; lipid IV(A) from (3R)-3-hydroxytetradecanoyl-[acyl-carrier-protein] and UDP-N-acetyl-alpha-D-glucosamine: step 2/6. Its function is as follows. Catalyzes the hydrolysis of UDP-3-O-myristoyl-N-acetylglucosamine to form UDP-3-O-myristoylglucosamine and acetate, the committed step in lipid A biosynthesis. In Histophilus somni (strain 129Pt) (Haemophilus somnus), this protein is UDP-3-O-acyl-N-acetylglucosamine deacetylase.